The following is a 79-amino-acid chain: Large ribosomal subunit protein uL24 (79 aa).

Belongs to the universal ribosomal protein uL24 family. As to quaternary structure, part of the 50S ribosomal subunit.

In terms of biological role, one of two assembly initiator proteins, it binds directly to the 5'-end of the 23S rRNA, where it nucleates assembly of the 50S subunit. Its function is as follows. One of the proteins that surrounds the polypeptide exit tunnel on the outside of the subunit. The chain is Large ribosomal subunit protein uL24 from Aliarcobacter butzleri (strain RM4018) (Arcobacter butzleri).